A 112-amino-acid polypeptide reads, in one-letter code: Beta-defensin 126 (112 aa).

A signal peptide spans 1 to 20; sequence MKSLLFTLAVFMLLAQLVSG. The segment at 21 to 63 is in vitro binds to LPS, mediates antimicrobial activity and inhibits LPS-mediated inflammation; the sequence is NWYVKKCLNDVGICKKKCKPEELHVKNGRAMCGKQRDCCVPAD. Cystine bridges form between cysteine 27-cysteine 58, cysteine 34-cysteine 52, and cysteine 38-cysteine 59.

The protein belongs to the beta-defensin family. Homodimer or homooligomer; disulfide-linked. O-glycosylated; glycans contain alpha(2,3)-linked sialic acids.

The protein localises to the secreted. Its function is as follows. Highly glycosylated atypical beta-defensin involved in several aspects of sperm function. Facilitates sperm transport in the female reproductive tract and contributes to sperm protection against immunodetection; both functions are probably implicating the negative surface charge provided by its O-linked oligosaccharides in the sperm glycocalyx. Involved in binding of sperm to oviductal epithelial cells to form a sperm reservoir until ovulation. Release from the sperm surface during capacitation and ovaluation by an elevation of oviductal fluid pH is unmasking other surface components and allows sperm to penetrate the cumulus matrix and bind to the zona pellucida of the oocyte. In vitro has antimicrobial activity and may inhibit LPS-mediated inflammation. This Hylobates lar (Lar gibbon) protein is Beta-defensin 126 (DEFB126).